A 200-amino-acid polypeptide reads, in one-letter code: Glycerol-3-phosphate acyltransferase (200 aa).

A run of 5 helical transmembrane segments spans residues 8-28 (ALAL…GMVL), 57-77 (LAAA…VLAA), 88-108 (IAGL…FAGG), 114-134 (FLGI…LAWL), and 159-179 (FLLG…LIFW).

It belongs to the PlsY family. Probably interacts with PlsX.

It is found in the cell inner membrane. The catalysed reaction is an acyl phosphate + sn-glycerol 3-phosphate = a 1-acyl-sn-glycero-3-phosphate + phosphate. It functions in the pathway lipid metabolism; phospholipid metabolism. Functionally, catalyzes the transfer of an acyl group from acyl-phosphate (acyl-PO(4)) to glycerol-3-phosphate (G3P) to form lysophosphatidic acid (LPA). This enzyme utilizes acyl-phosphate as fatty acyl donor, but not acyl-CoA or acyl-ACP. The chain is Glycerol-3-phosphate acyltransferase from Roseobacter denitrificans (strain ATCC 33942 / OCh 114) (Erythrobacter sp. (strain OCh 114)).